The chain runs to 147 residues: Nucleoside diphosphate kinase (147 aa).

The ATP site is built by K9, F57, R85, T91, R102, and N112. H115 serves as the catalytic Pros-phosphohistidine intermediate.

Belongs to the NDK family. As to quaternary structure, homotetramer. The cofactor is Mg(2+).

The protein resides in the cytoplasm. The catalysed reaction is a 2'-deoxyribonucleoside 5'-diphosphate + ATP = a 2'-deoxyribonucleoside 5'-triphosphate + ADP. It carries out the reaction a ribonucleoside 5'-diphosphate + ATP = a ribonucleoside 5'-triphosphate + ADP. In terms of biological role, major role in the synthesis of nucleoside triphosphates other than ATP. The ATP gamma phosphate is transferred to the NDP beta phosphate via a ping-pong mechanism, using a phosphorylated active-site intermediate. The sequence is that of Nucleoside diphosphate kinase from Brevibacillus brevis (strain 47 / JCM 6285 / NBRC 100599).